Here is a 186-residue protein sequence, read N- to C-terminus: Fucolectin-6 (186 aa).

The first 32 residues, 1 to 32 (MKTCNLTDRMKVKMIMLLFQILAISTLQSVSA), serve as a signal peptide directing secretion. The F5/8 type C-like stretch occupies residues 40–186 (QENVAVRGKA…VEVNAMLPAN (147 aa)). 4 residues coordinate Ca(2+): asparagine 67, aspartate 70, asparagine 72, and serine 81. Disulfide bonds link cysteine 82–cysteine 175, cysteine 114–cysteine 115, and cysteine 137–cysteine 153. Histidine 84 and arginine 111 together coordinate alpha-L-fucose. The Cell attachment site signature appears at 111–113 (RGD). Position 118 (arginine 118) interacts with alpha-L-fucose. Residues cysteine 175 and glutamate 176 each coordinate Ca(2+).

This sequence belongs to the fucolectin family. In terms of assembly, homotrimer. As to expression, gill mucous cells.

Its subcellular location is the secreted. Acts as a defensive agent. Recognizes blood group fucosylated oligosaccharides including A, B, H and Lewis B-type antigens. Does not recognize Lewis A antigen and has low affinity for monovalent haptens. This Anguilla japonica (Japanese eel) protein is Fucolectin-6.